Reading from the N-terminus, the 320-residue chain is Pyrroline-5-carboxylate reductase 2 (320 aa).

S2 is subject to N-acetylserine. NADP(+)-binding positions include 6–11 (IGAGQL) and S34. NADPH is bound by residues A8, Q10, L11, S34, E36, N56, V70, K71, and A97. NADP(+) is bound by residues N56, 69-72 (AVKP), and 95-97 (CAA). Residue E164 participates in L-proline binding. Residue N230 coordinates NADPH. Residues A237 and T238 each contribute to the L-proline site. Residues 293–320 (ESPTVSTLAPPSSGKLLTRNPAQGSKRE) form a disordered region. S304 carries the phosphoserine modification.

The protein belongs to the pyrroline-5-carboxylate reductase family. Homodecamer; composed of 5 homodimers. Interacts with LTO1.

The protein resides in the cytoplasm. It localises to the mitochondrion. The enzyme catalyses L-proline + NADP(+) = (S)-1-pyrroline-5-carboxylate + NADPH + 2 H(+). It catalyses the reaction L-proline + NAD(+) = (S)-1-pyrroline-5-carboxylate + NADH + 2 H(+). It functions in the pathway amino-acid biosynthesis; L-proline biosynthesis; L-proline from L-glutamate 5-semialdehyde: step 1/1. Its function is as follows. Oxidoreductase that catalyzes the last step in proline biosynthesis, which corresponds to the reduction of pyrroline-5-carboxylate to L-proline using NAD(P)H. At physiologic concentrations, has higher specific activity in the presence of NADH. Involved in cellular response to oxidative stress. In some cell types, such as erythrocytes, its primary function may be the generation of NADP(+). This Rattus norvegicus (Rat) protein is Pyrroline-5-carboxylate reductase 2.